The sequence spans 372 residues: GDSL esterase/lipase At1g54020 (372 aa).

A signal peptide spans 1 to 26 (MECSSVSVLGILLVFPLLHNLVTISG). Residue Ser-40 is the Nucleophile of the active site. N-linked (GlcNAc...) asparagine glycosylation is found at Asn-161 and Asn-280. Active-site residues include Asp-314 and His-317.

Belongs to the 'GDSL' lipolytic enzyme family.

It is found in the secreted. In Arabidopsis thaliana (Mouse-ear cress), this protein is GDSL esterase/lipase At1g54020.